A 521-amino-acid chain; its full sequence is Vang-like protein 2-B (521 aa).

The span at 1–18 (MDNDSQYSGYSYKSGQSR) shows a compositional bias: low complexity. A disordered region spans residues 1–73 (MDNDSQYSGY…RDDNWGETTT (73 aa)). At 1-108 (MDNDSQYSGY…AKLDCSRHLG (108 aa)) the chain is on the cytoplasmic side. A compositionally biased stretch (basic residues) spans 19 to 33 (SSRKHRDRRERHRSK). Residues 57–67 (ESTRGEDRDDN) are compositionally biased toward basic and acidic residues. Residues 109 to 129 (VVIAGALALLSFLTPIAFMLL) form a helical membrane-spanning segment. Topologically, residues 130 to 147 (PQILWREDLEQCGTACEG) are extracellular. A helical transmembrane segment spans residues 148 to 168 (LFISVAFKLLILLLGSWALFF). The Cytoplasmic portion of the chain corresponds to 169–178 (RRPKAFFPRV). Residues 179–199 (FVFRALLMVLVFLLVVSYWLF) form a helical membrane-spanning segment. Topologically, residues 200 to 218 (YGVRILESRDKNYQGIVQY) are extracellular. Residues 219-239 (AVSLVDALLFVHYLAVVLLEL) traverse the membrane as a helical segment. At 240–521 (RQLQPQFTIK…VMRLQSETSV (282 aa)) the chain is on the cytoplasmic side. Residues 518–521 (ETSV) carry the PDZ-binding motif.

Belongs to the Vang family. Interacts with dvl/dsh. Interacts with prickle3. During gastrulation, broadly expressed in the dorsal region in both mesodermal and neural tissues. From the neurula stages, expressed throughout the neural tube. In tailbud stages, expression declines in the anterior notochord but remains strong in the posterior notochord and in the neural tube. Also weakly expressed in the prenephritic region of late tailbud embryos.

It is found in the cell membrane. In terms of biological role, has a role in non-canonical Wnt/planar cell polarity (PCP) signaling; can recruit dvl/dsh and prickle from the cytoplasm to the plasma membrane. Acts in a PCP complex to regulate the polarized assembly of fibronectrin on the surface of the mesoderm during gastrulation. Regulates convergent extension in both dorsal mesoderm and neural tissue without affecting cell fate. Regulates neural fold closure during neurulation. May be required for cell surface localization of fzd3 and fzd6 in the inner ear. The polypeptide is Vang-like protein 2-B (vangl2-b) (Xenopus laevis (African clawed frog)).